Here is a 239-residue protein sequence, read N- to C-terminus: Purine nucleoside phosphorylase DeoD-type (239 aa).

A purine D-ribonucleoside is bound at residue histidine 5. Phosphate contacts are provided by residues glycine 21, arginine 25, arginine 44, and 88–91 (RVGS). Residues 180 to 182 (EME) and 204 to 205 (SD) contribute to the a purine D-ribonucleoside site. Catalysis depends on aspartate 205, which acts as the Proton donor.

It belongs to the PNP/UDP phosphorylase family. Homohexamer; trimer of homodimers.

It carries out the reaction a purine D-ribonucleoside + phosphate = a purine nucleobase + alpha-D-ribose 1-phosphate. The enzyme catalyses a purine 2'-deoxy-D-ribonucleoside + phosphate = a purine nucleobase + 2-deoxy-alpha-D-ribose 1-phosphate. Its function is as follows. Catalyzes the reversible phosphorolytic breakdown of the N-glycosidic bond in the beta-(deoxy)ribonucleoside molecules, with the formation of the corresponding free purine bases and pentose-1-phosphate. The polypeptide is Purine nucleoside phosphorylase DeoD-type (Pectobacterium atrosepticum (strain SCRI 1043 / ATCC BAA-672) (Erwinia carotovora subsp. atroseptica)).